Reading from the N-terminus, the 361-residue chain is Peptide chain release factor 1 (361 aa).

Q238 carries the post-translational modification N5-methylglutamine.

This sequence belongs to the prokaryotic/mitochondrial release factor family. Post-translationally, methylated by PrmC. Methylation increases the termination efficiency of RF1.

It localises to the cytoplasm. In terms of biological role, peptide chain release factor 1 directs the termination of translation in response to the peptide chain termination codons UAG and UAA. The sequence is that of Peptide chain release factor 1 from Mesomycoplasma hyopneumoniae (strain J / ATCC 25934 / NCTC 10110) (Mycoplasma hyopneumoniae).